Here is a 240-residue protein sequence, read N- to C-terminus: Serine protease SplB (240 aa).

The N-terminal stretch at 1–36 is a signal peptide; the sequence is MNKNVVIKSLATLTILTSVTGIGTTLVEEVQQTAKA. Catalysis depends on charge relay system residues His75, Asp113, and Ser193.

Belongs to the peptidase S1B family.

The protein resides in the secreted. Its function is as follows. Serine protease that cleaves specifically after the sequence Trp-Glu-Leu-Gln. In Staphylococcus aureus (strain Mu3 / ATCC 700698), this protein is Serine protease SplB (splB).